Consider the following 1033-residue polypeptide: MSDGGIEIDFQAFYDRFTKLGKAYSGFEGSPNSLLFVLGSTNEENPYQKTTILHNWLLGYEFPATLIAFFKDKGVIITSSAKAKHLLPAVTKFEGSDYKLEIWQRNNKDANHNKKLFEDLIKLLSENGNTVGVPTKDSYQGKLILEWKPLWEEAKKTHSLNVIDCSAGLSSTWKGKDDKEKAYLSVSSKGSDKFMDLMSNEIVNAVDEELKISNSKLSDKIENKIDDSKFLKKLSSDLNPLCPTDEKFDVNFLDWAYSPIVQSGSKFDLKVSARSNNDSLFGKGSILASCGIRYKNYCSNITRTFLIDPTDEMTDNYDFLLILQEKIIDDLLKVEADPTSIYEKTLEFIKEKKPELLSHFTKNVGSLMGLEFRDSAGMINAKPTAHKISENCCYNISLGFGNLKDSKTGQVYAVQLADTVQLSSDGKPSTLTKYTKARSQISFYFNNEEENKAATVKSEKSKPPALPKPDGTSKILRSKLRGESRADDEEKEQIRKENQRKLHERLQKEGLLRYSDADAVDGDEKPKHFFKKYESYVRETQIPSNVRDLKIHVDWKSQTIILPIYGRPVPFHINSYKNGSKNEEGEYTYLRLNFHSPGAGGVGKKTEELPYEENPENQFVRSLTLRSKDGARMSDVFKQITDLKKESTKREQERKALADVVVQAKLVENKTGRTKRLDQIFVRPSPDTKRVPGTVFIHENGIRYQSPLRTDSRIDILFSNIKNLFFQSSKGELIVIIHVHLKNPILMGKKKIQDIQFYREASDMAVDETGNSRRNNMKFRRYGDEDELEQEQEERRKRAALDKEFRYFAEAIAEASDGLLDVDSPFRDLGFQGVPSRSAVFCMPTRDCLIQLVEPPFLVINLNEVEICILERVQFGLKNFDMVFVYKDLTKPVSHINTVPIEQLEFIKTWLTDVDIPYTVSTINLNWSTIMKSLQDDPHQFFLDGGWSFLATGSDDERSDESEEEISEYEASDEDPSDEEVYSEEEEDYSDDEKFSDEGSDDFADGSEDDEGDDWDDLEKKAAKADRNSNYKE.

Positions 99–124 form a coiled coil; it reads KLEIWQRNNKDANHNKKLFEDLIKLL. The interval 454 to 474 is disordered; it reads ATVKSEKSKPPALPKPDGTSK. 2 coiled-coil regions span residues 479–509 and 638–659; these read KLRG…LQKE and KQIT…ALAD. Disordered regions lie at residues 776 to 795 and 953 to 1033; these read NMKF…QEER and GSDD…NYKE. Acidic residues-rich tracts occupy residues 957-991 and 998-1017; these read ERSD…DYSD and EGSD…DWDD. Positions 1018-1033 are enriched in basic and acidic residues; sequence LEKKAAKADRNSNYKE.

This sequence belongs to the peptidase M24 family. SPT16 subfamily. As to quaternary structure, forms a stable heterodimer with POB3. The SPT16-POB3 dimer weakly associates with multiple molecules of NHP6 to form the FACT complex.

The protein resides in the nucleus. It localises to the chromosome. In terms of biological role, component of the FACT complex, a general chromatin factor that acts to reorganize nucleosomes. The FACT complex is involved in multiple processes that require DNA as a template such as mRNA elongation, DNA replication and DNA repair. During transcription elongation the FACT complex acts as a histone chaperone that both destabilizes and restores nucleosomal structure. It facilitates the passage of RNA polymerase II and transcription by promoting the dissociation of one histone H2A-H2B dimer from the nucleosome, then subsequently promotes the reestablishment of the nucleosome following the passage of RNA polymerase II. The sequence is that of FACT complex subunit SPT16 (SPT16) from Kluyveromyces lactis (strain ATCC 8585 / CBS 2359 / DSM 70799 / NBRC 1267 / NRRL Y-1140 / WM37) (Yeast).